A 145-amino-acid chain; its full sequence is Class I hydrophobin 1 (145 aa).

A signal peptide spans 1-19 (MKFSYAIAAVVAAAASVQA). 4 cysteine pairs are disulfide-bonded: Cys65/Cys126, Cys72/Cys120, Cys73/Cys106, and Cys127/Cys140. Residues Asn80 and Asn129 are each glycosylated (N-linked (GlcNAc...) asparagine).

It belongs to the fungal hydrophobin family. As to quaternary structure, self-assembles to form functional amyloid fibrils called rodlets. Self-assembly into fibrillar rodlets occurs spontaneously at hydrophobic:hydrophilic interfaces and the rodlets further associate laterally to form amphipathic monolayers.

The protein resides in the secreted. It is found in the cell wall. Aerial growth, conidiation, and dispersal of filamentous fungi in the environment rely upon a capability of their secreting small amphipathic proteins called hydrophobins (HPBs) with low sequence identity. Class I can self-assemble into an outermost layer of rodlet bundles on aerial cell surfaces, conferring cellular hydrophobicity that supports fungal growth, development and dispersal; whereas Class II form highly ordered films at water-air interfaces through intermolecular interactions but contribute nothing to the rodlet structure. Hyd1 is a class I hydrophobin that is crucial for the initiation of primordia formation. Plays also important roles in nitrogen regulation and resistance to abiotic stresses. The chain is Class I hydrophobin 1 from Ganoderma lucidum (Ling zhi medicinal fungus).